The primary structure comprises 346 residues: Heparan sulfate glucosamine 3-O-sulfotransferase 5 (346 aa).

Over 1–12 the chain is Cytoplasmic; it reads MLFKQQAWLRQK. A helical; Signal-anchor for type II membrane protein transmembrane segment spans residues 13–32; that stretch reads LLVLGSLAVGSLLYLVARVG. Residues 33-346 lie on the Lumenal side of the membrane; it reads SLDRLQPICP…QITGRTLNWP (314 aa). Residue 100-104 coordinates 3'-phosphoadenylyl sulfate; the sequence is KGGTR. Substrate contacts are provided by residues 122-128 and 155-158; these read EIHFFDN and KSPA. Residues Arg-183 and Ser-191 each contribute to the 3'-phosphoadenylyl sulfate site. Residue 226–227 participates in substrate binding; that stretch reads YK. Residue Asn-287 is glycosylated (N-linked (GlcNAc...) asparagine). Tyr-293 serves as a coordination point for 3'-phosphoadenylyl sulfate. The cysteines at positions 294 and 304 are disulfide-linked. 309–313 contacts 3'-phosphoadenylyl sulfate; that stretch reads KGRIH.

It belongs to the sulfotransferase 1 family. As to expression, highly expressed in skeletal muscle and fetal brain, and also found in adult brain, spinal cord, cerebellum and colon.

It is found in the golgi apparatus membrane. The enzyme catalyses alpha-D-glucosaminyl-[heparan sulfate](n) + 3'-phosphoadenylyl sulfate = 3-sulfo-alpha-D-glucosaminyl-[heparan sulfate](n) + adenosine 3',5'-bisphosphate + H(+). In terms of biological role, sulfotransferase that utilizes 3'-phospho-5'-adenylyl sulfate (PAPS) to catalyze the transfer of a sulfo group to position 3 of glucosamine residues in heparan. Catalyzes the rate limiting step in the biosynthesis of heparan sulfate (HSact). This modification is a crucial step in the biosynthesis of anticoagulant heparan sulfate as it completes the structure of the antithrombin pentasaccharide binding site. Also generates GlcUA-GlcNS or IdoUA-GlcNS and IdoUA2S-GlcNH2. The substrate-specific O-sulfation generates an enzyme-modified heparan sulfate which acts as a binding receptor to Herpes simplex virus-1 (HSV-1) and permits its entry. This Homo sapiens (Human) protein is Heparan sulfate glucosamine 3-O-sulfotransferase 5 (HS3ST5).